We begin with the raw amino-acid sequence, 135 residues long: uncharacterized protein (135 aa).

The interval 1–75 is disordered; that stretch reads MAAATETGQA…PPPRPPQRRC (75 aa).

This is an uncharacterized protein from Homo sapiens (Human).